Consider the following 99-residue polypeptide: Malonate decarboxylase acyl carrier protein (99 aa).

Ser-25 carries the post-translational modification O-(phosphoribosyl dephospho-coenzyme A)serine.

This sequence belongs to the MdcC family. Covalently binds the prosthetic group of malonate decarboxylase.

The protein localises to the cytoplasm. Its function is as follows. Subunit of malonate decarboxylase, it is an acyl carrier protein to which acetyl and malonyl thioester residues are bound via a 2'-(5''-phosphoribosyl)-3'-dephospho-CoA prosthetic group and turn over during the catalytic mechanism. This Pseudomonas syringae pv. tomato (strain ATCC BAA-871 / DC3000) protein is Malonate decarboxylase acyl carrier protein.